Reading from the N-terminus, the 192-residue chain is Orotate phosphoribosyltransferase (192 aa).

Glutamate 116–serine 124 contacts 5-phospho-alpha-D-ribose 1-diphosphate. Residues threonine 120 and arginine 148 each contribute to the orotate site.

Belongs to the purine/pyrimidine phosphoribosyltransferase family. PyrE subfamily. Homodimer. Mg(2+) is required as a cofactor.

It carries out the reaction orotidine 5'-phosphate + diphosphate = orotate + 5-phospho-alpha-D-ribose 1-diphosphate. It functions in the pathway pyrimidine metabolism; UMP biosynthesis via de novo pathway; UMP from orotate: step 1/2. Functionally, catalyzes the transfer of a ribosyl phosphate group from 5-phosphoribose 1-diphosphate to orotate, leading to the formation of orotidine monophosphate (OMP). The protein is Orotate phosphoribosyltransferase of Brucella canis (strain ATCC 23365 / NCTC 10854 / RM-666).